Consider the following 66-residue polypeptide: Probable Sec-independent protein translocase protein TatE (66 aa).

A helical membrane pass occupies residues 1-21 (MEGISITKLLVIAVLIVLLFG). The segment at 46–66 (ETPAAKKSDGVEAAPRVENKE) is disordered.

Belongs to the TatA/E family. TatE subfamily.

The protein localises to the cell inner membrane. In terms of biological role, part of the twin-arginine translocation (Tat) system that transports large folded proteins containing a characteristic twin-arginine motif in their signal peptide across membranes. TatE shares overlapping functions with TatA. The protein is Probable Sec-independent protein translocase protein TatE of Edwardsiella ictaluri (strain 93-146).